The chain runs to 63 residues: Lantipeptide Flvbeta.a (63 aa).

The propeptide at 1-28 (MSEKNMEKAGVVKADELDEMIDETTGGA) is cleaved by FlvT. Residues threonine 30, threonine 33, threonine 38, and threonine 39 each carry the 2,3-didehydrobutyrine; by FlvM2 modification. The lanthionine (Ser-Cys); by FlvM2 cross-link spans 43–49 (SKGLQNC). 2,3-didehydrobutyrine; by FlvM2 is present on residues threonine 54 and threonine 55.

Post-translationally, maturation of FlvA2 peptides involves the enzymatic conversion of Thr, and Ser into dehydrated AA and the formation of thioether bonds with cysteines. Modifications are processed by the flavecin synthetase FlvM2. This is followed by membrane translocation and cleavage of the modified precursor. Contains DL-lanthionine, when coepressed in E.coli with the flavecin synthetase FlvM2.

The protein resides in the secreted. Functionally, lanthionine-containing peptide that does probably not show antibacterial activity, since its analog [+3]Flvbeta.a does not show antibacterial activity against M.luteus. Also does not show antibiotic activity when tested with [Del2]Flvalpha.a, an analog of Flvalpha.a, which is encoded by the same operon than Flvbeta.a. The bactericidal activity of lantibiotics is based on depolarization of energized bacterial cytoplasmic membranes, initiated by the formation of aqueous transmembrane pores. The protein is Lantipeptide Flvbeta.a of Ruminococcus flavefaciens.